The following is a 451-amino-acid chain: 3-carboxy-cis,cis-muconate cycloisomerase (451 aa).

It belongs to the class-II fumarase/aspartase family. In terms of assembly, homotetramer.

It catalyses the reaction 2-(carboxymethyl)-5-oxo-2,5-dihydro-2-furoate = 3-carboxy-cis,cis-muconate + H(+). It participates in aromatic compound metabolism; beta-ketoadipate pathway; 5-oxo-4,5-dihydro-2-furylacetate from 3-carboxy-cis,cis-muconate: step 1/2. In terms of biological role, catalyzes an anti cycloisomerization. The chain is 3-carboxy-cis,cis-muconate cycloisomerase (pcaB) from Acinetobacter baylyi (strain ATCC 33305 / BD413 / ADP1).